A 142-amino-acid polypeptide reads, in one-letter code: Hemoglobin A subunit alpha-1 (142 aa).

The 141-residue stretch at 2 to 142 (VLTAGDKANV…VATALTSKYR (141 aa)) folds into the Globin domain. An O2-binding site is contributed by H59. Residue H88 participates in heme b binding.

This sequence belongs to the globin family. As to quaternary structure, tetramer of alpha-1, alpha-2 and two identical beta chains. Red blood cells.

Involved in oxygen transport from the lung to the various peripheral tissues. This chain is Hemoglobin A subunit alpha-1, found in Aldabrachelys gigantea (Aldabra giant tortoise).